Consider the following 58-residue polypeptide: MARRRKYEGLNPFVAAGLIKFSEEGELEKIKLSPKAAIAISLAIIAAILALNLLLPPP.

The Cytoplasmic segment spans residues 1 to 33; the sequence is MARRRKYEGLNPFVAAGLIKFSEEGELEKIKLS. The chain crosses the membrane as a helical span at residues 34 to 55; it reads PKAAIAISLAIIAAILALNLLL. Residues 56 to 58 lie on the Extracellular side of the membrane; that stretch reads PPP.

The protein belongs to the SEC61-beta family. Component of the protein translocase complex. Heterotrimer consisting of alpha (SecY), beta (SecG) and gamma (SecE) subunits. Can form oligomers of the heterotrimer.

It is found in the cell membrane. In terms of biological role, involved in protein export. The function of the beta subunit is unknown, but it may be involved in stabilization of the trimeric complex. In Pyrobaculum calidifontis (strain DSM 21063 / JCM 11548 / VA1), this protein is Preprotein translocase subunit SecG.